The following is a 302-amino-acid chain: Sulfate adenylyltransferase subunit 2 (302 aa).

The tract at residues 279-302 (ERQGRAIDHDSSGSMELKKRQGYF) is disordered. The segment covering 280-302 (RQGRAIDHDSSGSMELKKRQGYF) has biased composition (basic and acidic residues).

Belongs to the PAPS reductase family. CysD subfamily. Heterodimer composed of CysD, the smaller subunit, and CysN.

It carries out the reaction sulfate + ATP + H(+) = adenosine 5'-phosphosulfate + diphosphate. Its pathway is sulfur metabolism; hydrogen sulfide biosynthesis; sulfite from sulfate: step 1/3. Functionally, with CysN forms the ATP sulfurylase (ATPS) that catalyzes the adenylation of sulfate producing adenosine 5'-phosphosulfate (APS) and diphosphate, the first enzymatic step in sulfur assimilation pathway. APS synthesis involves the formation of a high-energy phosphoric-sulfuric acid anhydride bond driven by GTP hydrolysis by CysN coupled to ATP hydrolysis by CysD. This is Sulfate adenylyltransferase subunit 2 from Aliivibrio fischeri (strain ATCC 700601 / ES114) (Vibrio fischeri).